A 100-amino-acid polypeptide reads, in one-letter code: Aspartyl/glutamyl-tRNA(Asn/Gln) amidotransferase subunit C (100 aa).

Belongs to the GatC family. Heterotrimer of A, B and C subunits.

The enzyme catalyses L-glutamyl-tRNA(Gln) + L-glutamine + ATP + H2O = L-glutaminyl-tRNA(Gln) + L-glutamate + ADP + phosphate + H(+). The catalysed reaction is L-aspartyl-tRNA(Asn) + L-glutamine + ATP + H2O = L-asparaginyl-tRNA(Asn) + L-glutamate + ADP + phosphate + 2 H(+). Functionally, allows the formation of correctly charged Asn-tRNA(Asn) or Gln-tRNA(Gln) through the transamidation of misacylated Asp-tRNA(Asn) or Glu-tRNA(Gln) in organisms which lack either or both of asparaginyl-tRNA or glutaminyl-tRNA synthetases. The reaction takes place in the presence of glutamine and ATP through an activated phospho-Asp-tRNA(Asn) or phospho-Glu-tRNA(Gln). This is Aspartyl/glutamyl-tRNA(Asn/Gln) amidotransferase subunit C from Petrotoga mobilis (strain DSM 10674 / SJ95).